The primary structure comprises 176 residues: COA8 family protein CG14806, mitochondrial (176 aa).

Residues 1–23 (MNKCFRCQPRISLFQFSLPRCYA) constitute a mitochondrion transit peptide.

Belongs to the COA8 family.

The protein resides in the mitochondrion inner membrane. May be required for cytochrome c complex (COX) assembly and function, COX being the terminal component of the mitochondrial respiratory chain. In terms of biological role, (Microbial infection) Required for optimal replication of E.chaffeensis. This Drosophila melanogaster (Fruit fly) protein is COA8 family protein CG14806, mitochondrial.